A 101-amino-acid polypeptide reads, in one-letter code: U1-sicaritoxin-Li1a (101 aa).

Residues 1–19 form the signal peptide; that stretch reads MRFLVGAVLVVVLVACATA. A propeptide spanning residues 20-35 is cleaved from the precursor; the sequence is FESDAETFKSLVVEER. 4 cysteine pairs are disulfide-bonded: Cys37/Cys54, Cys45/Cys59, Cys53/Cys72, and Cys61/Cys70. Residue Lys81 is modified to Lysine amide. Residues 85-101 constitute a propeptide that is removed on maturation; it reads ALLLPVETHRLLFPEQW.

It belongs to the neurotoxin 28 (Litx) family. Expressed by the venom gland.

Its subcellular location is the secreted. Its function is as follows. Toxin active against insects (S.frugiperda larvae). May act on sodium (Nav) or calcium channels (Cav). The sequence is that of U1-sicaritoxin-Li1a from Loxosceles intermedia (Brown spider).